The sequence spans 743 residues: Isocitrate dehydrogenase [NADP] 2 (743 aa).

Positions 87 and 89 each coordinate NADP(+). D-threo-isocitrate is bound by residues S134, N137, R141, R147, and K257. Residue N137 participates in NADP(+) binding. Residue D352 coordinates Mg(2+). The D-threo-isocitrate site is built by Y422 and R549. Positions 550 and 554 each coordinate Mg(2+). NADP(+) contacts are provided by S587, H591, R602, D604, and R651.

Belongs to the monomeric-type IDH family. As to quaternary structure, monomer. Mg(2+) serves as cofactor. It depends on Mn(2+) as a cofactor.

The enzyme catalyses D-threo-isocitrate + NADP(+) = 2-oxoglutarate + CO2 + NADPH. Functionally, catalyzes the oxidative decarboxylation of isocitrate to 2-oxoglutarate and carbon dioxide with the concomitant reduction of NADP(+). The sequence is that of Isocitrate dehydrogenase [NADP] 2 (icd2) from Colwellia maris.